The primary structure comprises 185 residues: ATP synthase subunit delta (185 aa).

This sequence belongs to the ATPase delta chain family. In terms of assembly, F-type ATPases have 2 components, F(1) - the catalytic core - and F(0) - the membrane proton channel. F(1) has five subunits: alpha(3), beta(3), gamma(1), delta(1), epsilon(1). CF(0) has four main subunits: a(1), b(2) and c(10-14). The alpha and beta chains form an alternating ring which encloses part of the gamma chain. F(1) is attached to F(0) by a central stalk formed by the gamma and epsilon chains, while a peripheral stalk is formed by the delta and b chains.

It localises to the cell membrane. Functionally, f(1)F(0) ATP synthase produces ATP from ADP in the presence of a proton or sodium gradient. F-type ATPases consist of two structural domains, F(1) containing the extramembraneous catalytic core and F(0) containing the membrane proton channel, linked together by a central stalk and a peripheral stalk. During catalysis, ATP synthesis in the catalytic domain of F(1) is coupled via a rotary mechanism of the central stalk subunits to proton translocation. Its function is as follows. This protein is part of the stalk that links CF(0) to CF(1). It either transmits conformational changes from CF(0) to CF(1) or is implicated in proton conduction. This chain is ATP synthase subunit delta, found in Heliobacterium modesticaldum (strain ATCC 51547 / Ice1).